A 248-amino-acid polypeptide reads, in one-letter code: 4-hydroxy-tetrahydrodipicolinate reductase (248 aa).

NAD(+) is bound by residues 9–14 (GAKGRV), 77–79 (GTT), and 104–107 (APNF). The active-site Proton donor/acceptor is H134. Position 135 (H135) interacts with (S)-2,3,4,5-tetrahydrodipicolinate. K138 serves as the catalytic Proton donor. 144–145 (GT) provides a ligand contact to (S)-2,3,4,5-tetrahydrodipicolinate.

The protein belongs to the DapB family.

It is found in the cytoplasm. It carries out the reaction (S)-2,3,4,5-tetrahydrodipicolinate + NAD(+) + H2O = (2S,4S)-4-hydroxy-2,3,4,5-tetrahydrodipicolinate + NADH + H(+). The catalysed reaction is (S)-2,3,4,5-tetrahydrodipicolinate + NADP(+) + H2O = (2S,4S)-4-hydroxy-2,3,4,5-tetrahydrodipicolinate + NADPH + H(+). The protein operates within amino-acid biosynthesis; L-lysine biosynthesis via DAP pathway; (S)-tetrahydrodipicolinate from L-aspartate: step 4/4. Catalyzes the conversion of 4-hydroxy-tetrahydrodipicolinate (HTPA) to tetrahydrodipicolinate. The protein is 4-hydroxy-tetrahydrodipicolinate reductase of Corynebacterium glutamicum (strain R).